A 91-amino-acid polypeptide reads, in one-letter code: DNA-directed RNA polymerase subunit omega (91 aa).

It belongs to the RNA polymerase subunit omega family. The RNAP catalytic core consists of 2 alpha, 1 beta, 1 beta' and 1 omega subunit. When a sigma factor is associated with the core the holoenzyme is formed, which can initiate transcription.

The catalysed reaction is RNA(n) + a ribonucleoside 5'-triphosphate = RNA(n+1) + diphosphate. In terms of biological role, promotes RNA polymerase assembly. Latches the N- and C-terminal regions of the beta' subunit thereby facilitating its interaction with the beta and alpha subunits. This is DNA-directed RNA polymerase subunit omega from Erwinia tasmaniensis (strain DSM 17950 / CFBP 7177 / CIP 109463 / NCPPB 4357 / Et1/99).